We begin with the raw amino-acid sequence, 236 residues long: 7-cyano-7-deazaguanine synthase (236 aa).

An ATP-binding site is contributed by 7–17 (CSGGLDSVSLA). Zn(2+) is bound by residues Cys-185, Cys-193, Cys-196, and Cys-199.

It belongs to the QueC family. Requires Zn(2+) as cofactor.

The enzyme catalyses 7-carboxy-7-deazaguanine + NH4(+) + ATP = 7-cyano-7-deazaguanine + ADP + phosphate + H2O + H(+). The protein operates within purine metabolism; 7-cyano-7-deazaguanine biosynthesis. In terms of biological role, catalyzes the ATP-dependent conversion of 7-carboxy-7-deazaguanine (CDG) to 7-cyano-7-deazaguanine (preQ(0)). This Rhizobium etli (strain ATCC 51251 / DSM 11541 / JCM 21823 / NBRC 15573 / CFN 42) protein is 7-cyano-7-deazaguanine synthase.